Consider the following 210-residue polypeptide: T-cell surface glycoprotein CD8 beta chain (210 aa).

The signal sequence occupies residues 1–21 (MRPRLWLLLAAQLAVLHGSSV). An Ig-like V-type domain is found at 22–132 (LQQTPAYIKV…ELTFGKGTQL (111 aa)). The Extracellular segment spans residues 22–170 (LQQTPAYIKV…ETQKGPLCSP (149 aa)). Cysteine 41 and cysteine 116 are oxidised to a cystine. Asparagine 102 carries N-linked (GlcNAc...) asparagine glycosylation. A helical transmembrane segment spans residues 171–191 (ITLGLLVAGVLVLLVSLGVAI). At 192–210 (HLCCRRRRARLRFMKQFYK) the chain is on the cytoplasmic side.

Forms disulfide-linked heterodimers with CD8A at the cell surface. Interacts with CD3D; this interaction couples TCR-CD3 with CD8. Interacts with LCK. Post-translationally, phosphorylated as a consequence of T-cell activation. In terms of processing, palmitoylated at the cytoplasmic tail and thereby targets the heterodimer CD8A/CD8B to lipid rafts unlike CD8A homodimers.

The protein resides in the cell membrane. Integral membrane glycoprotein that plays an essential role in the immune response and serves multiple functions in responses against both external and internal offenses. In T-cells, functions primarily as a coreceptor for MHC class I molecule:peptide complex. The antigens presented by class I peptides are derived from cytosolic proteins while class II derived from extracellular proteins. Interacts simultaneously with the T-cell receptor (TCR) and the MHC class I proteins presented by antigen presenting cells (APCs). In turn, recruits the Src kinase LCK to the vicinity of the TCR-CD3 complex. A palmitoylation site in the cytoplasmic tail of CD8B chain contributes to partitioning of CD8 into the plasma membrane lipid rafts where signaling proteins are enriched. Once LCK recruited, it initiates different intracellular signaling pathways by phosphorylating various substrates ultimately leading to lymphokine production, motility, adhesion and activation of cytotoxic T-lymphocytes (CTLs). Additionally, plays a critical role in thymic selection of CD8+ T-cells. In Pongo pygmaeus (Bornean orangutan), this protein is T-cell surface glycoprotein CD8 beta chain (CD8B).